We begin with the raw amino-acid sequence, 302 residues long: Succinate--CoA ligase [ADP-forming] subunit alpha (302 aa).

Residues 17-20 (TGST), Lys43, and 96-98 (ITE) contribute to the CoA site. Tyr159 is a binding site for substrate. His247 (tele-phosphohistidine intermediate) is an active-site residue.

It belongs to the succinate/malate CoA ligase alpha subunit family. Heterotetramer of two alpha and two beta subunits.

It catalyses the reaction succinate + ATP + CoA = succinyl-CoA + ADP + phosphate. The catalysed reaction is GTP + succinate + CoA = succinyl-CoA + GDP + phosphate. It functions in the pathway carbohydrate metabolism; tricarboxylic acid cycle; succinate from succinyl-CoA (ligase route): step 1/1. In terms of biological role, succinyl-CoA synthetase functions in the citric acid cycle (TCA), coupling the hydrolysis of succinyl-CoA to the synthesis of either ATP or GTP and thus represents the only step of substrate-level phosphorylation in the TCA. The alpha subunit of the enzyme binds the substrates coenzyme A and phosphate, while succinate binding and nucleotide specificity is provided by the beta subunit. The polypeptide is Succinate--CoA ligase [ADP-forming] subunit alpha (Staphylococcus aureus (strain COL)).